Here is a 600-residue protein sequence, read N- to C-terminus: Jacalin-related lectin 18 (600 aa).

4 Jacalin-type lectin domains span residues 12–158 (TQRL…YFTC), 161–303 (PTRM…YFTT), 304–447 (SPFI…YFRL), and 454–597 (GEKV…HVLP).

It belongs to the jacalin lectin family.

The chain is Jacalin-related lectin 18 (JAL18) from Arabidopsis thaliana (Mouse-ear cress).